Reading from the N-terminus, the 122-residue chain is Large ribosomal subunit protein bL12 (122 aa).

Belongs to the bacterial ribosomal protein bL12 family. In terms of assembly, homodimer. Part of the ribosomal stalk of the 50S ribosomal subunit. Forms a multimeric L10(L12)X complex, where L10 forms an elongated spine to which 2 to 4 L12 dimers bind in a sequential fashion. Binds GTP-bound translation factors.

Forms part of the ribosomal stalk which helps the ribosome interact with GTP-bound translation factors. Is thus essential for accurate translation. The polypeptide is Large ribosomal subunit protein bL12 (Mycoplasma capricolum subsp. capricolum (strain California kid / ATCC 27343 / NCTC 10154)).